Here is a 138-residue protein sequence, read N- to C-terminus: Probable non-specific lipid-transfer protein 1 (138 aa).

An N-terminal signal peptide occupies residues 1–36 (MRTVSARSSVALVVIVAAVLVWTSSASVAPAPAPGS). 4 cysteine pairs are disulfide-bonded: cysteine 40/cysteine 88, cysteine 50/cysteine 65, cysteine 66/cysteine 111, and cysteine 86/cysteine 127.

The protein belongs to the plant LTP family.

Plant non-specific lipid-transfer proteins transfer phospholipids as well as galactolipids across membranes. May play a role in wax or cutin deposition in the cell walls of expanding epidermal cells and certain secretory tissues. This Parietaria judaica (Pellitory-of-the-wall) protein is Probable non-specific lipid-transfer protein 1.